The chain runs to 355 residues: MAKDERQAALDAALKKIEKNFGKGSIMRMGEKVDTQVSTVSSGSLALDEALGVGGYPRGRIVEIYGPESSGKTTVALHAVAEVQKQGGTAAYIDAENAMDPKYATALGVNIDDLLLSQPDTGEQGLEIADALVSSGAVDILVVDSVAALVPRAEIEGEMGDAHVGLQARLMSQALRKLSGTINKTKTIALFINQIREKVGVMFGNPEVTPGGRALKFYSTVRLEVRRAETIKNGTDMIGNRARIKVVKNKVAPPFKVAEVDIMYGQGISRTGELVDMAVEKDIINKSGSWYSYGSERIGQGRENAKNYLADHEDVEDEVRLKVRAAYGISDVPEEDLPTTEDEQINILPDDSTEE.

Position 66 to 73 (66 to 73 (GPESSGKT)) interacts with ATP. The segment at 331 to 355 (DVPEEDLPTTEDEQINILPDDSTEE) is disordered. Acidic residues predominate over residues 332 to 344 (VPEEDLPTTEDEQ).

It belongs to the RecA family.

The protein localises to the cytoplasm. Functionally, can catalyze the hydrolysis of ATP in the presence of single-stranded DNA, the ATP-dependent uptake of single-stranded DNA by duplex DNA, and the ATP-dependent hybridization of homologous single-stranded DNAs. It interacts with LexA causing its activation and leading to its autocatalytic cleavage. The chain is Protein RecA from Latilactobacillus sakei subsp. sakei (strain 23K) (Lactobacillus sakei subsp. sakei).